The sequence spans 62 residues: Probable tautomerase SH1546 (62 aa).

Proline 2 (proton acceptor; via imino nitrogen) is an active-site residue.

The protein belongs to the 4-oxalocrotonate tautomerase family.

The sequence is that of Probable tautomerase SH1546 from Staphylococcus haemolyticus (strain JCSC1435).